A 340-amino-acid chain; its full sequence is KH domain-containing RNA-binding protein QKI (340 aa).

One can recognise a KH domain in the interval 87–153 (YVPVKEYPDF…WEHLNEDLHV (67 aa)). The SH3-binding signature appears at 275 to 278 (PPGP). A Nuclear localization signal motif is present at residues 323-329 (RVHPYQR).

Belongs to the quaking family. As to quaternary structure, homodimer; does not require RNA to homodimerize.

It is found in the cytoplasm. The protein localises to the nucleus. RNA reader protein, which recognizes and binds specific RNAs, thereby regulating RNA metabolic processes, such as pre-mRNA splicing, circular RNA (circRNA) formation, mRNA export, mRNA stability and/or translation. Involved in various cellular processes, such as mRNA storage into stress granules, apoptosis, interferon response, glial cell fate and development. Binds to the 5'-NACUAAY-N(1,20)-UAAY-3' RNA core sequence. Acts as a mRNA modification reader that specifically recognizes and binds mRNA transcripts modified by internal N(7)-methylguanine (m7G). Promotes the formation of circular RNAs (circRNAs): acts by binding to sites flanking circRNA-forming exons. CircRNAs are produced by back-splicing circularization of pre-mRNAs. Required to protect and promote stability of mRNAs which promotes oligodendrocyte differentiation. Acts as an important regulator of muscle development. This chain is KH domain-containing RNA-binding protein QKI, found in Gallus gallus (Chicken).